We begin with the raw amino-acid sequence, 109 residues long: Phosphoribosyl-ATP pyrophosphatase (109 aa).

It belongs to the PRA-PH family.

Its subcellular location is the cytoplasm. It carries out the reaction 1-(5-phospho-beta-D-ribosyl)-ATP + H2O = 1-(5-phospho-beta-D-ribosyl)-5'-AMP + diphosphate + H(+). It functions in the pathway amino-acid biosynthesis; L-histidine biosynthesis; L-histidine from 5-phospho-alpha-D-ribose 1-diphosphate: step 2/9. This chain is Phosphoribosyl-ATP pyrophosphatase, found in Geobacter metallireducens (strain ATCC 53774 / DSM 7210 / GS-15).